Consider the following 210-residue polypeptide: Na(+)-translocating NADH-quinone reductase subunit D (210 aa).

A run of 6 helical transmembrane segments spans residues 10 to 30, 42 to 62, 72 to 92, 103 to 123, 131 to 151, and 178 to 198; these read VLIG…GVCS, LVMT…ISLI, IIVQ…VLQA, VFVG…AYAM, FMDG…VGFV, and NGLL…IWII.

It belongs to the NqrDE/RnfAE family. In terms of assembly, composed of six subunits; NqrA, NqrB, NqrC, NqrD, NqrE and NqrF.

Its subcellular location is the cell inner membrane. The enzyme catalyses a ubiquinone + n Na(+)(in) + NADH + H(+) = a ubiquinol + n Na(+)(out) + NAD(+). Its function is as follows. NQR complex catalyzes the reduction of ubiquinone-1 to ubiquinol by two successive reactions, coupled with the transport of Na(+) ions from the cytoplasm to the periplasm. NqrA to NqrE are probably involved in the second step, the conversion of ubisemiquinone to ubiquinol. The chain is Na(+)-translocating NADH-quinone reductase subunit D from Shewanella pealeana (strain ATCC 700345 / ANG-SQ1).